Consider the following 136-residue polypeptide: MANSLCFFSSPPTFCFQSPSKNPKPSHFFSTNDNTSSLVQKRELLQTSRSQSFEVKAANNNPQGTKPNSLVCANCEGEGCVACSQCKGGGVNLIDHFNGQFKAGALCWLCRGKKEVLCGDCNGAGFIGGFLSTFDE.

Residues 1-56 (MANSLCFFSSPPTFCFQSPSKNPKPSHFFSTNDNTSSLVQKRELLQTSRSQSFEVK) constitute a chloroplast transit peptide. The CR-type zinc finger occupies 62 to 133 (PQGTKPNSLV…AGFIGGFLST (72 aa)). Zn(2+) contacts are provided by C72, C75, E78, C80, C83, C86, C107, C110, E115, C118, and C121.

This sequence belongs to the BSD2 chaperone family. In terms of assembly, interacts with the RuBisCo large subunit (RbcL) assembled as an intermediate complex made of eight RbcL and eight BSD2 subunits.

The protein localises to the plastid. It localises to the chloroplast stroma. Chloroplast chaperone required for RuBisCo biogenesis and translational regulation of the RuBisCo large subunit (RbcL). Stabilizes an end-state assembly intermediate of eight RbcL subunits until the small subunits (RBCSs) become available to produce a complete stable RuBisCo complex containing eight small and eight large subunits. This is Protein BUNDLE SHEATH DEFECTIVE 2, chloroplastic from Arabidopsis thaliana (Mouse-ear cress).